A 142-amino-acid chain; its full sequence is Large ribosomal subunit protein uL13 (142 aa).

Belongs to the universal ribosomal protein uL13 family. As to quaternary structure, part of the 50S ribosomal subunit.

Functionally, this protein is one of the early assembly proteins of the 50S ribosomal subunit, although it is not seen to bind rRNA by itself. It is important during the early stages of 50S assembly. The protein is Large ribosomal subunit protein uL13 of Agathobacter rectalis (strain ATCC 33656 / DSM 3377 / JCM 17463 / KCTC 5835 / VPI 0990) (Eubacterium rectale).